The chain runs to 368 residues: HECT-type ubiquitin ligase-interacting protein apyA (368 aa).

Belongs to the arrestin family. Interacts with hulA.

Functionally, may be involved in signaling by recognizing appropriately phosphorylated substrates via its arrestin domains and then recruit a HECT-type ubiquitin ligase such as hulA, leading to ubiquitination of the substrate, providing a link between ubiquitination and phosphorylation in protein regulation and stability. The sequence is that of HECT-type ubiquitin ligase-interacting protein apyA (apyA) from Emericella nidulans (strain FGSC A4 / ATCC 38163 / CBS 112.46 / NRRL 194 / M139) (Aspergillus nidulans).